We begin with the raw amino-acid sequence, 85 residues long: Putative membrane protein insertion efficiency factor (85 aa).

The segment at 62-85 (KGGFDPVPLKKDKSASKHSHKHNH) is disordered.

The protein belongs to the UPF0161 family.

It localises to the cell membrane. In terms of biological role, could be involved in insertion of integral membrane proteins into the membrane. This Staphylococcus aureus (strain Mu3 / ATCC 700698) protein is Putative membrane protein insertion efficiency factor.